The primary structure comprises 293 residues: Acetyl-coenzyme A carboxylase carboxyl transferase subunit beta (293 aa).

The region spanning Leu29 to Asp293 is the CoA carboxyltransferase N-terminal domain. Cys33, Cys36, Cys52, and Cys55 together coordinate Zn(2+). A C4-type zinc finger spans residues Cys33–Cys55.

It belongs to the AccD/PCCB family. In terms of assembly, acetyl-CoA carboxylase is a heterohexamer composed of biotin carboxyl carrier protein (AccB), biotin carboxylase (AccC) and two subunits each of ACCase subunit alpha (AccA) and ACCase subunit beta (AccD). It depends on Zn(2+) as a cofactor.

It is found in the cytoplasm. It carries out the reaction N(6)-carboxybiotinyl-L-lysyl-[protein] + acetyl-CoA = N(6)-biotinyl-L-lysyl-[protein] + malonyl-CoA. It participates in lipid metabolism; malonyl-CoA biosynthesis; malonyl-CoA from acetyl-CoA: step 1/1. In terms of biological role, component of the acetyl coenzyme A carboxylase (ACC) complex. Biotin carboxylase (BC) catalyzes the carboxylation of biotin on its carrier protein (BCCP) and then the CO(2) group is transferred by the transcarboxylase to acetyl-CoA to form malonyl-CoA. This Alcanivorax borkumensis (strain ATCC 700651 / DSM 11573 / NCIMB 13689 / SK2) protein is Acetyl-coenzyme A carboxylase carboxyl transferase subunit beta.